We begin with the raw amino-acid sequence, 287 residues long: Bifunctional protein FolD (287 aa).

NADP(+)-binding positions include 165-167 (NRS), Ser-190, and Ile-233.

The protein belongs to the tetrahydrofolate dehydrogenase/cyclohydrolase family. As to quaternary structure, homodimer.

It carries out the reaction (6R)-5,10-methylene-5,6,7,8-tetrahydrofolate + NADP(+) = (6R)-5,10-methenyltetrahydrofolate + NADPH. It catalyses the reaction (6R)-5,10-methenyltetrahydrofolate + H2O = (6R)-10-formyltetrahydrofolate + H(+). It functions in the pathway one-carbon metabolism; tetrahydrofolate interconversion. Functionally, catalyzes the oxidation of 5,10-methylenetetrahydrofolate to 5,10-methenyltetrahydrofolate and then the hydrolysis of 5,10-methenyltetrahydrofolate to 10-formyltetrahydrofolate. In Nitrosopumilus maritimus (strain SCM1), this protein is Bifunctional protein FolD.